Here is a 435-residue protein sequence, read N- to C-terminus: MTITNQQLFERSRQYIPGGVNSPVRAFKSVGGTPVFFQRGQGAYFWDVEGKSYIDYVGSWGPLILGHAHPDVVRAVQIAAGHGTSFGAPTAAELEIAELLCRLLPSLEMVRLVSSGTEAGMSAIRLARGYTGRNRIIKFEGCYHGHDDALLVKAGSGALTFGHPSSAGVPAETAGHTLVLNYNDVAGVEETFSKMGTEIAAVIVEPVAGNMNLIKATSQFLETLRTLCTKHGSLLILDEVMTGFRVGLECAQGLYGIKPDLTILGKVIGGGLPMAAFGGRRDVMECLAPLGSVYQAGTLSGNPVAVAAGLETLHQIQVPGFFDKLSTMTRKLTEGLTAVAAKHSVAFCAQAVGGMFGLYFRKSPPESFAEVMESDREAFNHFFHAMLKEGVYFAPSAFEAGFVSAAHSNEEIDKTLAVADRIFGQGMRRTEKATL.

Residue Lys-266 is modified to N6-(pyridoxal phosphate)lysine.

Belongs to the class-III pyridoxal-phosphate-dependent aminotransferase family. HemL subfamily. In terms of assembly, homodimer. Pyridoxal 5'-phosphate serves as cofactor.

The protein localises to the cytoplasm. It carries out the reaction (S)-4-amino-5-oxopentanoate = 5-aminolevulinate. It participates in porphyrin-containing compound metabolism; protoporphyrin-IX biosynthesis; 5-aminolevulinate from L-glutamyl-tRNA(Glu): step 2/2. The sequence is that of Glutamate-1-semialdehyde 2,1-aminomutase from Nitrosomonas europaea (strain ATCC 19718 / CIP 103999 / KCTC 2705 / NBRC 14298).